The chain runs to 239 residues: Large ribosomal subunit protein uL1 (239 aa).

This sequence belongs to the universal ribosomal protein uL1 family. As to quaternary structure, part of the 50S ribosomal subunit.

Functionally, binds directly to 23S rRNA. The L1 stalk is quite mobile in the ribosome, and is involved in E site tRNA release. In terms of biological role, protein L1 is also a translational repressor protein, it controls the translation of the L11 operon by binding to its mRNA. In Rickettsia bellii (strain OSU 85-389), this protein is Large ribosomal subunit protein uL1.